The chain runs to 451 residues: Chromosomal replication initiator protein DnaA 2 (451 aa).

Residues 1 to 68 are domain I, interacts with DnaA modulators; that stretch reads MQAWEEFLKA…QQKFINGNNK (68 aa). The tract at residues 68–104 is domain II; sequence KRIKIHLSVANTPQRAKKTKTANKEKDFKAPFELTFD. A domain III, AAA+ region region spans residues 105-326; it reads ELDPLCLFPY…KGLEALVLRL (222 aa). Residues Gly-156, Gly-158, Lys-159, and Thr-160 each coordinate ATP. Residues 327–451 form a domain IV, binds dsDNA region; that stretch reads HLDAKHSITA…CHIILKKLQG (125 aa).

It belongs to the DnaA family. In terms of assembly, oligomerizes as a right-handed, spiral filament on DNA at oriC.

The protein resides in the cytoplasm. In terms of biological role, plays an essential role in the initiation and regulation of chromosomal replication. ATP-DnaA binds to the origin of replication (oriC) to initiate formation of the DNA replication initiation complex once per cell cycle. Binds the DnaA box (a 9 base pair repeat at the origin) and separates the double-stranded (ds)DNA. Forms a right-handed helical filament on oriC DNA; dsDNA binds to the exterior of the filament while single-stranded (ss)DNA is stabiized in the filament's interior. The ATP-DnaA-oriC complex binds and stabilizes one strand of the AT-rich DNA unwinding element (DUE), permitting loading of DNA polymerase. After initiation quickly degrades to an ADP-DnaA complex that is not apt for DNA replication. Binds acidic phospholipids. This chain is Chromosomal replication initiator protein DnaA 2, found in Protochlamydia amoebophila (strain UWE25).